The following is a 217-amino-acid chain: Cytidylate kinase (217 aa).

10–18 (GPAGAGKST) is a binding site for ATP.

It belongs to the cytidylate kinase family. Type 1 subfamily.

It is found in the cytoplasm. It carries out the reaction CMP + ATP = CDP + ADP. The catalysed reaction is dCMP + ATP = dCDP + ADP. The protein is Cytidylate kinase of Clostridium botulinum (strain Langeland / NCTC 10281 / Type F).